The chain runs to 356 residues: GATA zinc finger domain-containing protein 17 (356 aa).

Residues leucine 91–leucine 119 are a coiled coil. Positions threonine 158–leucine 188 are enriched in low complexity. The interval threonine 158–glutamate 294 is disordered. The segment covering serine 206–valine 228 has biased composition (acidic residues). Low complexity predominate over residues threonine 260–aspartate 284. The GATA-type zinc finger occupies cysteine 304–cysteine 331.

The chain is GATA zinc finger domain-containing protein 17 (gtaQ) from Dictyostelium discoideum (Social amoeba).